A 340-amino-acid polypeptide reads, in one-letter code: MNNRFLDACWGKPVDRTPVWLMRQAGRYLPEYMAVRSKCTFLELCKTPELAAEVTLQPVDILGVDAAILFSDILTPVEPMGLKLDFVPGPVFETPVRTMADVERLRIPNPEEDVPYVLDTIKILRKELAGRVPLIGFGGAPFTLACYMVEGKGSKDWATIKRMMYAAPEVYAALMDKVTMMDMEYLNAQIRAGAQAIQIFDTWGGVLSPTDYEKFVLPYTRKLINGLNRQNTPVIHFVKGAGTMLETVQKAGGDVMGLDWHVNLGKARDVLGPNMAVQGNLDPTVLYAPKEVIEVEVKRVLDENAGRPGHIFNLGHGILPTVPPENAIHMVECVHRLSQK.

Substrate-binding positions include 23-27, aspartate 72, tyrosine 147, threonine 202, and histidine 316; that span reads RQAGR.

Belongs to the uroporphyrinogen decarboxylase family. As to quaternary structure, homodimer.

Its subcellular location is the cytoplasm. It carries out the reaction uroporphyrinogen III + 4 H(+) = coproporphyrinogen III + 4 CO2. It functions in the pathway porphyrin-containing compound metabolism; protoporphyrin-IX biosynthesis; coproporphyrinogen-III from 5-aminolevulinate: step 4/4. Functionally, catalyzes the decarboxylation of four acetate groups of uroporphyrinogen-III to yield coproporphyrinogen-III. In Geobacter metallireducens (strain ATCC 53774 / DSM 7210 / GS-15), this protein is Uroporphyrinogen decarboxylase.